Reading from the N-terminus, the 554-residue chain is Glucose-6-phosphate isomerase (554 aa).

S2 carries the N-acetylserine modification. T53 carries the post-translational modification Phosphothreonine. D-glucose 6-phosphate is bound by residues 168 to 169 (GS), 218 to 223 (SKTFTT), Q363, E367, H398, and K520. Residue T220 is modified to Phosphothreonine. Catalysis depends on E367, which acts as the Proton donor. Catalysis depends on residues H398 and K520.

This sequence belongs to the GPI family. As to quaternary structure, homodimer.

Its subcellular location is the cytoplasm. It localises to the cytosol. The catalysed reaction is alpha-D-glucose 6-phosphate = beta-D-fructose 6-phosphate. The protein operates within carbohydrate degradation; glycolysis; D-glyceraldehyde 3-phosphate and glycerone phosphate from D-glucose: step 2/4. With respect to regulation, strongly inhibited by the polyol (sugar alcohol) phosphate D-glucitol 6-phosphate (D-sorbitol 6-phosphate). Also inhibited by the polyol (sugar alcohol) phosphate D-ribitol 5-phosphate. In the cytoplasm, catalyzes the conversion of glucose-6-phosphate to fructose-6-phosphate, the second step in glycolysis, and the reverse reaction during gluconeogenesis. The protein is Glucose-6-phosphate isomerase (PGI1) of Saccharomyces cerevisiae (strain ATCC 204508 / S288c) (Baker's yeast).